The following is a 118-amino-acid chain: Large ribosomal subunit protein uL18 (118 aa).

It belongs to the universal ribosomal protein uL18 family. Part of the 50S ribosomal subunit; part of the 5S rRNA/L5/L18/L25 subcomplex. Contacts the 5S and 23S rRNAs.

This is one of the proteins that bind and probably mediate the attachment of the 5S RNA into the large ribosomal subunit, where it forms part of the central protuberance. The polypeptide is Large ribosomal subunit protein uL18 (Rickettsia akari (strain Hartford)).